A 177-amino-acid polypeptide reads, in one-letter code: ATP synthase subunit b (177 aa).

Residues 29–49 (FFFVLAIFLIVLAVIGTFVVP) traverse the membrane as a helical segment.

Belongs to the ATPase B chain family. As to quaternary structure, F-type ATPases have 2 components, F(1) - the catalytic core - and F(0) - the membrane proton channel. F(1) has five subunits: alpha(3), beta(3), gamma(1), delta(1), epsilon(1). F(0) has three main subunits: a(1), b(2) and c(10-14). The alpha and beta chains form an alternating ring which encloses part of the gamma chain. F(1) is attached to F(0) by a central stalk formed by the gamma and epsilon chains, while a peripheral stalk is formed by the delta and b chains.

Its subcellular location is the cell membrane. F(1)F(0) ATP synthase produces ATP from ADP in the presence of a proton or sodium gradient. F-type ATPases consist of two structural domains, F(1) containing the extramembraneous catalytic core and F(0) containing the membrane proton channel, linked together by a central stalk and a peripheral stalk. During catalysis, ATP synthesis in the catalytic domain of F(1) is coupled via a rotary mechanism of the central stalk subunits to proton translocation. Functionally, component of the F(0) channel, it forms part of the peripheral stalk, linking F(1) to F(0). This is ATP synthase subunit b from Mycolicibacterium paratuberculosis (strain ATCC BAA-968 / K-10) (Mycobacterium paratuberculosis).